We begin with the raw amino-acid sequence, 490 residues long: Cobyric acid synthase (490 aa).

The region spanning 252 to 439 (RLKVVVPVLP…LHGLFESTAA (188 aa)) is the GATase cobBQ-type domain. C333 functions as the Nucleophile in the catalytic mechanism. H431 is a catalytic residue.

Belongs to the CobB/CobQ family. CobQ subfamily.

It functions in the pathway cofactor biosynthesis; adenosylcobalamin biosynthesis. Its function is as follows. Catalyzes amidations at positions B, D, E, and G on adenosylcobyrinic A,C-diamide. NH(2) groups are provided by glutamine, and one molecule of ATP is hydrogenolyzed for each amidation. The polypeptide is Cobyric acid synthase (Pseudomonas aeruginosa (strain LESB58)).